A 381-amino-acid chain; its full sequence is Heterogeneous nuclear rnp K-like protein 2 (381 aa).

The disordered stretch occupies residues 1-34 (MSQFFEAATPVAIPTNNTNGGSSDAGSAATGGAP). Over residues 15 to 33 (TNNTNGGSSDAGSAATGGA) the composition is skewed to low complexity. KH domains follow at residues 43 to 107 (TINH…IGDI), 156 to 221 (IGYV…LIEI), and 258 to 326 (NTRI…ESML). A disordered region spans residues 344–381 (LEAAEGDATVVTERSDSASFLEEKEEPQENHDNKEEQS). Ser358, Ser360, and Ser362 each carry phosphoserine. Basic and acidic residues predominate over residues 370–381 (PQENHDNKEEQS).

The protein belongs to the HEK2 family. Binds RNA. Post-translationally, phosphorylated by the plasma membrane-Anchored casein kinase YCK1. Phosphorylation at its C-terminus reduces its RNA-binding capacity.

The protein resides in the cytoplasm. The protein localises to the P-body. Its subcellular location is the nucleus. It is found in the chromosome. It localises to the telomere. In terms of biological role, RNA-binding protein involved in the correct localization of transcripts in the cell. RNA localization is a widespread mechanism for achieving localized protein synthesis. Required for the asymmetric localization to the daughter cell nucleus of the ASH1 transcript, coding for a specific repressor of transcription. Overexpression inhibits translation of the ASH1 transcript. Involved in the stability of transcripts, like the MTL1 mRNA. Involved in structural and functional organization of telomeric chromatin and regulates silencing at the HMR locus. This Saccharomyces cerevisiae (strain YJM789) (Baker's yeast) protein is Heterogeneous nuclear rnp K-like protein 2 (HEK2).